The following is a 315-amino-acid chain: Protein LST8 homolog (315 aa).

WD repeat units follow at residues 1–31, 33–71, 76–115, 119–158, 161–200, 211–250, 253–292, and 295–315; these read MGDQ…KTMR, VETS…TAPV, GVQK…PHCS, DCES…HECI, EVDA…DQKM, AHTR…KWRE, IENY…PTRE, and GHTK…KVNH.

The protein belongs to the WD repeat LST8 family.

It is found in the cytoplasm. The polypeptide is Protein LST8 homolog (Drosophila pseudoobscura pseudoobscura (Fruit fly)).